Reading from the N-terminus, the 320-residue chain is Malate dehydrogenase (320 aa).

Residues glycine 10 to glycine 15 and aspartate 34 each bind NAD(+). Substrate contacts are provided by arginine 83 and arginine 89. Residues asparagine 96 and isoleucine 119–asparagine 121 contribute to the NAD(+) site. Substrate is bound by residues asparagine 121 and arginine 152. Histidine 176 (proton acceptor) is an active-site residue.

This sequence belongs to the LDH/MDH superfamily. MDH type 3 family.

The enzyme catalyses (S)-malate + NAD(+) = oxaloacetate + NADH + H(+). In terms of biological role, catalyzes the reversible oxidation of malate to oxaloacetate. The protein is Malate dehydrogenase of Maricaulis maris (strain MCS10) (Caulobacter maris).